Here is a 151-residue protein sequence, read N- to C-terminus: MADAFTDEQIQEFYEAFCLIDKDSDGFITKEKLTKVMKSMGKNPKAEQLQQMMSDVDIFGNGGITFDDFLYIMAQNTSQESASDELIEVFRVFDRDGDGLISQLELGEGMKDMGMKITAEEAEHMVREADLDGDGFLSFHEFSKMMIAASY.

4 consecutive EF-hand domains span residues 8 to 43 (EQIQEFYEAFCLIDKDSDGFITKEKLTKVMKSMGKN), 44 to 79 (PKAEQLQQMMSDVDIFGNGGITFDDFLYIMAQNTSQ), 81 to 116 (SASDELIEVFRVFDRDGDGLISQLELGEGMKDMGMK), and 117 to 151 (ITAEEAEHMVREADLDGDGFLSFHEFSKMMIAASY). 8 residues coordinate Ca(2+): aspartate 94, aspartate 96, aspartate 98, glutamate 105, aspartate 130, aspartate 132, aspartate 134, and glutamate 141.

Belongs to the calmodulin family. As to quaternary structure, interacts with IQD1. Interacts with ILK1. Binds to ABCG36. In terms of tissue distribution, expressed in leaves, flowers and siliques.

Functionally, potential calcium sensor. This Arabidopsis thaliana (Mouse-ear cress) protein is Calmodulin-like protein 9.